Reading from the N-terminus, the 435-residue chain is GTPase Der (435 aa).

EngA-type G domains are found at residues P3–T168 and I176–Q351. GTP-binding positions include G9–S16, D56–Y60, N120–E123, G182–S189, D229–L233, and N294–D297. In terms of domain architecture, KH-like spans K352–K435.

Belongs to the TRAFAC class TrmE-Era-EngA-EngB-Septin-like GTPase superfamily. EngA (Der) GTPase family. In terms of assembly, associates with the 50S ribosomal subunit.

In terms of biological role, GTPase that plays an essential role in the late steps of ribosome biogenesis. This Chlorobium phaeobacteroides (strain BS1) protein is GTPase Der.